A 315-amino-acid polypeptide reads, in one-letter code: Calumenin (315 aa).

An N-terminal signal peptide occupies residues 1–19; that stretch reads MDLRQFLMCLSLCTAFALS. Tyr47 bears the Phosphotyrosine mark. Residue Thr65 is modified to Phosphothreonine. EF-hand domains lie at 68-103, 104-139, 151-186, 188-223, 229-264, and 265-300; these read ESKEKLGMIVDKIDTDKDGFVTEGELKSRIKHAQKK, YIYDNVENQWQEFDMNQDGLISWDEYRNVTYGTYLD, PIMVRDERRFKMADQDGDLIATKEEFTAFLHPEEYD, MKDIVLQETMEDIDQNADGFIDLEEYIGDMYSHDGN, WVKTEREQFVEFRDKNRDGKMDKEETKDWILPSDYD, and HAEAEARHLVYESDQDKDGKLTKEEIVDKYDLFVGS. Ser69 carries the post-translational modification Phosphoserine. Positions 81, 83, 85, 92, 117, 119, 121, and 128 each coordinate Ca(2+). N-linked (GlcNAc...) asparagine glycosylation occurs at Asn131. 13 residues coordinate Ca(2+): Asp164, Asp166, Asp168, Glu175, Asp201, Asn203, Asp205, Glu212, Asp242, Asn244, Asp246, Lys248, and Glu253. Thr254 carries the post-translational modification Phosphothreonine. Residues Ser261 and Ser277 each carry the phosphoserine modification. 5 residues coordinate Ca(2+): Asp278, Asp280, Asp282, Lys284, and Glu289. Residues 312 to 315 carry the Prevents secretion from ER motif; it reads HDEF.

This sequence belongs to the CREC family. Binds crotoxin. Interacts with GGCX.

It localises to the endoplasmic reticulum membrane. Its subcellular location is the golgi apparatus. The protein resides in the secreted. The protein localises to the melanosome. It is found in the sarcoplasmic reticulum lumen. Its function is as follows. Involved in regulation of vitamin K-dependent carboxylation of multiple N-terminal glutamate residues. Seems to inhibit gamma-carboxylase GGCX. Binds 7 calcium ions with a low affinity. The protein is Calumenin (Calu) of Rattus norvegicus (Rat).